The chain runs to 510 residues: D-alanine--D-alanyl carrier protein ligase (510 aa).

Position 157 to 158 (Thr157 to Ser158) interacts with ATP. Asp202 serves as a coordination point for D-alanine. Residue Asn297–Thr302 coordinates ATP. Val306 is a D-alanine binding site. Residues Asp389 and Lys498 each coordinate ATP. Residue Lys498 coordinates D-alanine.

The protein belongs to the ATP-dependent AMP-binding enzyme family. DltA subfamily.

The protein resides in the cytoplasm. The catalysed reaction is holo-[D-alanyl-carrier protein] + D-alanine + ATP = D-alanyl-[D-alanyl-carrier protein] + AMP + diphosphate. Its pathway is cell wall biogenesis; lipoteichoic acid biosynthesis. Its function is as follows. Catalyzes the first step in the D-alanylation of lipoteichoic acid (LTA), the activation of D-alanine and its transfer onto the D-alanyl carrier protein (Dcp) DltC. In an ATP-dependent two-step reaction, forms a high energy D-alanyl-AMP intermediate, followed by transfer of the D-alanyl residue as a thiol ester to the phosphopantheinyl prosthetic group of the Dcp. D-alanylation of LTA plays an important role in modulating the properties of the cell wall in Gram-positive bacteria, influencing the net charge of the cell wall. The polypeptide is D-alanine--D-alanyl carrier protein ligase (Listeria welshimeri serovar 6b (strain ATCC 35897 / DSM 20650 / CCUG 15529 / CIP 8149 / NCTC 11857 / SLCC 5334 / V8)).